The primary structure comprises 264 residues: Apolipoprotein A-I (264 aa).

Residues 1–18 (MRGVLVTLAVLFLTGTQA) form the signal peptide. 2 repeat units span residues 67–88 (LKLA…EDMA) and 89–110 (PYYK…AELT). The segment at 67-264 (LKLADNLDTL…FLDELQKSVA (198 aa)) is 10 X approximate tandem repeats. Residues 111–121 (KDLEEVKEKIR) form a 3; half-length repeat. 5 consecutive repeat copies span residues 122 to 143 (PFLD…QRLT), 144 to 165 (PVAQ…AKLT), 166 to 187 (PVAE…KNLA), 188 to 209 (PYSD…EKGI), and 210 to 231 (PQAS…EKMT). One copy of the 9; half-length repeat lies at 232–242 (PLVQEFRERLT). Residues 243–264 (PYAENLKNRLISFLDELQKSVA) form repeat 10.

This sequence belongs to the apolipoprotein A1/A4/E family. In terms of assembly, homodimer. As to expression, major protein of plasma HDL, also found in chylomicrons.

Its subcellular location is the secreted. Its function is as follows. Participates in the reverse transport of cholesterol from tissues to the liver for excretion by promoting cholesterol efflux from tissues and by acting as a cofactor for the lecithin cholesterol acyltransferase (LCAT). This is Apolipoprotein A-I (APOA1) from Gallus gallus (Chicken).